Reading from the N-terminus, the 180-residue chain is uncharacterized protein (180 aa).

Transmembrane regions (helical) follow at residues 37-59 (VLHAAAAVTEYAFVLSTLVFPSF) and 128-147 (AGSATLFAGAAGAALRVLFV).

The protein resides in the cell membrane. This is an uncharacterized protein from Treponema pallidum (strain Nichols).